The primary structure comprises 371 residues: Polygalacturonase (371 aa).

The signal sequence occupies residues 1 to 19 (MPSYLRNLVWATLAAGLVS). The propeptide occupies 20–34 (AAPTPSRVSDLTKKS). A disulfide bridge links C38 with C53. PbH1 repeat units lie at residues 95-117 (GPLI…VINA), 165-195 (SDNL…DISE), 196-217 (STGV…AINS), 218-238 (GQNI…SIGS), 247-268 (VKNV…RIKT), 276-298 (VSDV…VIEQ), and 310-355 (TSGV…DITS). D210 (proton donor) is an active-site residue. Residues C212 and C228 are joined by a disulfide bond. H232 is an active-site residue. An N-linked (GlcNAc...) asparagine glycan is attached at N249. 2 disulfides stabilise this stretch: C338/C343 and C362/C371.

This sequence belongs to the glycosyl hydrolase 28 family.

It localises to the secreted. It carries out the reaction (1,4-alpha-D-galacturonosyl)n+m + H2O = (1,4-alpha-D-galacturonosyl)n + (1,4-alpha-D-galacturonosyl)m.. The polypeptide is Polygalacturonase (Penicillium janthinellum (Penicillium vitale)).